A 311-amino-acid polypeptide reads, in one-letter code: Regulator of rDNA transcription protein 6 (311 aa).

Transmembrane regions (helical) follow at residues 32–52 (PHLL…SAEL) and 271–291 (YLIV…IIVT).

The protein localises to the membrane. Its function is as follows. May be involved in the modulation of rDNA transcription. The sequence is that of Regulator of rDNA transcription protein 6 (RRT6) from Saccharomyces cerevisiae (strain ATCC 204508 / S288c) (Baker's yeast).